The chain runs to 144 residues: Ribonuclease H (144 aa).

One can recognise an RNase H type-1 domain in the interval 1-141; sequence MDKIDIYSDG…ADALANRGVE (141 aa). Residues D9, E47, D69, and D133 each coordinate Mg(2+).

It belongs to the RNase H family. As to quaternary structure, monomer. The cofactor is Mg(2+).

It localises to the cytoplasm. It carries out the reaction Endonucleolytic cleavage to 5'-phosphomonoester.. Functionally, endonuclease that specifically degrades the RNA of RNA-DNA hybrids. The protein is Ribonuclease H of Janthinobacterium sp. (strain Marseille) (Minibacterium massiliensis).